Consider the following 1157-residue polypeptide: Probable inactive leucine-rich repeat receptor kinase XIAO (1157 aa).

A signal peptide spans 1 to 21 (MPPPPRLLFLLVMLLVVAAPG). An N-linked (GlcNAc...) asparagine glycan is attached at Asn-58. LRR repeat units lie at residues 101-125 (LVYL…LSRI), 127-149 (SLRA…FLAN), 150-172 (LTNL…VSFP), 173-196 (PSLK…VSAS), 198-220 (TSLQ…SLGT), 221-245 (LQDL…LSNC), 247-269 (ALLH…VAAI), 270-293 (PSLQ…AFGG), 296-319 (NSSL…VSLG), 320-343 (KDLQ…LAGA), 344-367 (GGLT…VGQL), 368-391 (TALQ…IGRC), 393-414 (ALQV…ALGG), 415-439 (LRRL…LGNL), 440-463 (SWLE…LFVL), 464-487 (GNLT…IGNL), 489-511 (ALQS…IGNL), 513-536 (NLRV…LFGL), 537-559 (PQLQ…GFSS), 561-583 (WSLR…TYGY), 584-608 (LPSL…LANC), 609-631 (SNLT…DFAR), 632-656 (LGEL…ISNC), 658-680 (SLVT…LSNL), 681-704 (SKLQ…LAQI), and 706-728 (GMLS…LGSR). Asn-149 carries an N-linked (GlcNAc...) asparagine glycan. Asn-192, Asn-204, and Asn-244 each carry an N-linked (GlcNAc...) asparagine glycan. Asn-296 carries N-linked (GlcNAc...) asparagine glycosylation. N-linked (GlcNAc...) asparagine glycosylation is present at Asn-438. Residues Asn-465, Asn-494, and Asn-524 are each glycosylated (N-linked (GlcNAc...) asparagine). N-linked (GlcNAc...) asparagine glycans are attached at residues Asn-567, Asn-607, Asn-610, Asn-655, Asn-679, Asn-692, and Asn-711. A helical transmembrane segment spans residues 765–785 (LALLIGVVAATVLLLVLFCCC). Residues 804–825 (VKKRRRSPGRGSGSSGTSTDSV) are disordered. One can recognise a Protein kinase domain in the interval 849–1144 (FDEENVLSRG…LEGCRVGPDI (296 aa)). ATP is bound by residues 855-863 (LSRGRHGLV), 930-932 (DYM), 936-939 (NLAT), 980-985 (DVKPQN), and Asp-998.

It belongs to the protein kinase superfamily. Ser/Thr protein kinase family. As to expression, expressed in developing culm, coleoptile, primary root, young spikelet, young leaf blade and leaf sheath, floral meristem primordia, stamen primordia, and lemma and palea primordia.

The protein resides in the cell membrane. Its function is as follows. Functions in the early stages of organ development by regulating cell division rate. Is probably involved in the regulation of a number of cell-cycle genes. May act as regulator of brassinosteroid (BR) signaling and cell-cycle controlling organ growth. This is Probable inactive leucine-rich repeat receptor kinase XIAO from Oryza sativa subsp. japonica (Rice).